A 35-amino-acid polypeptide reads, in one-letter code: Dermonecrotic toxin LdSicTox-alpha-1 (35 aa).

H11 is a catalytic residue. E31 and D33 together coordinate Mg(2+).

Belongs to the arthropod phospholipase D family. Class I subfamily. Mg(2+) serves as cofactor. Contains 1 disulfide bond. As to expression, expressed by the venom gland.

The protein localises to the secreted. The catalysed reaction is an N-(acyl)-sphingosylphosphocholine = an N-(acyl)-sphingosyl-1,3-cyclic phosphate + choline. It carries out the reaction an N-(acyl)-sphingosylphosphoethanolamine = an N-(acyl)-sphingosyl-1,3-cyclic phosphate + ethanolamine. The enzyme catalyses a 1-acyl-sn-glycero-3-phosphocholine = a 1-acyl-sn-glycero-2,3-cyclic phosphate + choline. It catalyses the reaction a 1-acyl-sn-glycero-3-phosphoethanolamine = a 1-acyl-sn-glycero-2,3-cyclic phosphate + ethanolamine. Functionally, dermonecrotic toxins cleave the phosphodiester linkage between the phosphate and headgroup of certain phospholipids (sphingolipid and lysolipid substrates), forming an alcohol (often choline) and a cyclic phosphate. This toxin acts on sphingomyelin (SM). It may also act on ceramide phosphoethanolamine (CPE), lysophosphatidylcholine (LPC) and lysophosphatidylethanolamine (LPE), but not on lysophosphatidylserine (LPS), and lysophosphatidylglycerol (LPG). It acts by transphosphatidylation, releasing exclusively cyclic phosphate products as second products. Induces dermonecrosis, hemolysis, increased vascular permeability, edema, inflammatory response, and platelet aggregation. The sequence is that of Dermonecrotic toxin LdSicTox-alpha-1 from Loxosceles deserta (Desert recluse spider).